Consider the following 545-residue polypeptide: Esterase-5C (545 aa).

Residues 1–19 (MLAARLIILLSFYWLSASA) form the signal peptide. Cys-84 and Cys-103 form a disulfide bridge. A glycan (N-linked (GlcNAc...) asparagine) is linked at Asn-113. Ser-207 serves as the catalytic Acyl-ester intermediate. A disulfide bridge links Cys-259 with Cys-271. The N-linked (GlcNAc...) asparagine glycan is linked to Asn-421. Catalysis depends on His-467, which acts as the Charge relay system. Residue Asn-507 is glycosylated (N-linked (GlcNAc...) asparagine). Residues Cys-515 and Cys-536 are joined by a disulfide bond.

The protein belongs to the type-B carboxylesterase/lipase family.

It is found in the secreted. It catalyses the reaction a carboxylic ester + H2O = an alcohol + a carboxylate + H(+). This chain is Esterase-5C (Est-5C), found in Drosophila miranda (Fruit fly).